The sequence spans 843 residues: Protein translocase subunit SecA 1 (843 aa).

Residues glutamine 91, 109 to 113, and aspartate 498 contribute to the ATP site; that span reads GEGKT. The segment covering 799–813 has biased composition (basic and acidic residues); it reads EAKHVSAEDGKEKVK. The segment at 799–826 is disordered; sequence EAKHVSAEDGKEKVKPKPIVKGDQVGRN. The Zn(2+) site is built by cysteine 829, cysteine 831, cysteine 840, and histidine 841.

It belongs to the SecA family. In terms of assembly, monomer and homodimer. Part of the essential Sec protein translocation apparatus which comprises SecA, SecYEG and auxiliary proteins SecDF. Other proteins may also be involved. Zn(2+) is required as a cofactor.

Its subcellular location is the cell membrane. It localises to the cytoplasm. The catalysed reaction is ATP + H2O + cellular proteinSide 1 = ADP + phosphate + cellular proteinSide 2.. Functionally, part of the Sec protein translocase complex. Interacts with the SecYEG preprotein conducting channel. Has a central role in coupling the hydrolysis of ATP to the transfer of proteins into and across the cell membrane, serving as an ATP-driven molecular motor driving the stepwise translocation of polypeptide chains across the membrane. This chain is Protein translocase subunit SecA 1, found in Staphylococcus aureus (strain N315).